The following is a 214-amino-acid chain: Cytochrome c biogenesis ATP-binding export protein CcmA (214 aa).

In terms of domain architecture, ABC transporter spans 16-212 (LRVSGLSLSR…PDAKRIDLGA (197 aa)). An ATP-binding site is contributed by 48-55 (GPNGTGKT).

Belongs to the ABC transporter superfamily. CcmA exporter (TC 3.A.1.107) family. The complex is composed of two ATP-binding proteins (CcmA) and two transmembrane proteins (CcmB).

Its subcellular location is the cell inner membrane. The enzyme catalyses heme b(in) + ATP + H2O = heme b(out) + ADP + phosphate + H(+). Its function is as follows. Part of the ABC transporter complex CcmAB involved in the biogenesis of c-type cytochromes; once thought to export heme, this seems not to be the case, but its exact role is uncertain. Responsible for energy coupling to the transport system. The sequence is that of Cytochrome c biogenesis ATP-binding export protein CcmA from Maricaulis maris (strain MCS10) (Caulobacter maris).